A 456-amino-acid polypeptide reads, in one-letter code: Argininosuccinate lyase (456 aa).

This sequence belongs to the lyase 1 family. Argininosuccinate lyase subfamily.

The protein localises to the cytoplasm. The enzyme catalyses 2-(N(omega)-L-arginino)succinate = fumarate + L-arginine. The protein operates within amino-acid biosynthesis; L-arginine biosynthesis; L-arginine from L-ornithine and carbamoyl phosphate: step 3/3. This chain is Argininosuccinate lyase, found in Shewanella pealeana (strain ATCC 700345 / ANG-SQ1).